The following is a 308-amino-acid chain: Uricase (308 aa).

Catalysis depends on charge relay system residues Lys-5 and Thr-65. Thr-65, Asp-66, Phe-177, Arg-194, Ile-242, Gln-243, and Asn-269 together coordinate urate. Positions 283-308 (ASVLREPPAPTGFQQFSMDRGDLDEQ) are disordered.

This sequence belongs to the uricase family.

It catalyses the reaction urate + O2 + H2O = 5-hydroxyisourate + H2O2. It participates in purine metabolism; urate degradation; (S)-allantoin from urate: step 1/3. Catalyzes the oxidation of uric acid to 5-hydroxyisourate, which is further processed to form (S)-allantoin. The chain is Uricase from Haloferax volcanii (strain ATCC 29605 / DSM 3757 / JCM 8879 / NBRC 14742 / NCIMB 2012 / VKM B-1768 / DS2) (Halobacterium volcanii).